We begin with the raw amino-acid sequence, 938 residues long: Translation initiation factor IF-2 (938 aa).

The span at 57–205 (DKSKKVASKE…PKSEETKSEE (149 aa)) shows a compositional bias: basic and acidic residues. A disordered region spans residues 57 to 350 (DKSKKVASKE…RSADDLAQQE (294 aa)). Residues 206-215 (TTEGGESEEK) are compositionally biased toward acidic residues. Basic and acidic residues predominate over residues 248-259 (KKEEKKEDDKKD). 2 stretches are compositionally biased toward basic residues: residues 260 to 270 (KDRRKKRRRRI) and 285 to 296 (GAKKGGRTRSKP). Positions 297-319 (ITKEEPTEEEVQKQVRETLEKLQ) are enriched in basic and acidic residues. Basic residues predominate over residues 323–333 (SKGKGAKYRRQ). Residues 334-344 (KRDEHRQRSAD) show a composition bias toward basic and acidic residues. In terms of domain architecture, tr-type G spans 434-602 (TRAPIVTVMG…KVLLEAEILE (169 aa)). The interval 443-450 (GHVDHGKT) is G1. Residue 443–450 (GHVDHGKT) participates in GTP binding. The interval 468-472 (GITQH) is G2. The interval 490 to 493 (DTPG) is G3. Residues 490–494 (DTPGH) and 544–547 (NKSD) each bind GTP. A G4 region spans residues 544-547 (NKSD). Positions 580 to 582 (SAK) are G5.

This sequence belongs to the TRAFAC class translation factor GTPase superfamily. Classic translation factor GTPase family. IF-2 subfamily.

The protein localises to the cytoplasm. In terms of biological role, one of the essential components for the initiation of protein synthesis. Protects formylmethionyl-tRNA from spontaneous hydrolysis and promotes its binding to the 30S ribosomal subunits. Also involved in the hydrolysis of GTP during the formation of the 70S ribosomal complex. In Christiangramia forsetii (strain DSM 17595 / CGMCC 1.15422 / KT0803) (Gramella forsetii), this protein is Translation initiation factor IF-2.